Reading from the N-terminus, the 252-residue chain is Ribosomal RNA small subunit methyltransferase NEP1 (252 aa).

Residues Met-176, Gly-209, Gly-214, and 227-232 (ISNYPL) contribute to the S-adenosyl-L-methionine site.

This sequence belongs to the class IV-like SAM-binding methyltransferase superfamily. RNA methyltransferase NEP1 family. In terms of assembly, homodimer. Part of the small subunit (SSU) processome, composed of more than 70 proteins and the RNA chaperone small nucleolar RNA (snoRNA) U3.

It is found in the nucleus. The protein localises to the nucleolus. The catalysed reaction is a pseudouridine in rRNA + S-adenosyl-L-methionine = an N(1)-methylpseudouridine in rRNA + S-adenosyl-L-homocysteine + H(+). In terms of biological role, S-adenosyl-L-methionine-dependent pseudouridine N(1)-methyltransferase that methylates a pseudouridine in 18S rRNA. Involved the biosynthesis of the hypermodified N1-methyl-N3-(3-amino-3-carboxypropyl) pseudouridine (m1acp3-Psi) conserved in eukaryotic 18S rRNA. Also has an essential role in 40S ribosomal subunit biogenesis independent on its methyltransferase activity, facilitating the incorporation of ribosomal protein S19 during the formation of pre-ribosomes. S-adenosyl-L-methionine-dependent pseudouridine N(1)-methyltransferase that methylates pseudouridine at position in 18S rRNA. Involved the biosynthesis of the hypermodified N1-methyl-N3-(3-amino-3-carboxypropyl) pseudouridine (m1acp3-Psi) conserved in eukaryotic 18S rRNA. Is not able to methylate uridine at this position. Also has an essential role in 40S ribosomal subunit biogenesis independent on its methyltransferase activity, facilitating the incorporation of ribosomal protein S19 during the formation of pre-ribosomes. Part of the small subunit (SSU) processome, first precursor of the small eukaryotic ribosomal subunit. During the assembly of the SSU processome in the nucleolus, many ribosome biogenesis factors, an RNA chaperone and ribosomal proteins associate with the nascent pre-rRNA and work in concert to generate RNA folding, modifications, rearrangements and cleavage as well as targeted degradation of pre-ribosomal RNA by the RNA exosome. This chain is Ribosomal RNA small subunit methyltransferase NEP1, found in Drosophila melanogaster (Fruit fly).